The primary structure comprises 223 residues: uncharacterized protein (223 aa).

The next 5 membrane-spanning stretches (helical) occupy residues 28-48 (LSNT…GLIT), 59-79 (LIVQ…ITLA), 88-108 (AFNQ…MFFI), 128-148 (IVGL…VWLS), and 176-196 (AWAI…YMIV).

It localises to the cell membrane. This is an uncharacterized protein from Mycoplasma pneumoniae (strain ATCC 29342 / M129 / Subtype 1) (Mycoplasmoides pneumoniae).